Reading from the N-terminus, the 253-residue chain is HTH-type transcriptional regulator YdeO (253 aa).

An HTH araC/xylS-type domain is found at 137–233; the sequence is GKVRNIVNMK…GNSPKRVSKE (97 aa). 2 DNA-binding regions (H-T-H motif) span residues 154–175 and 200–223; these read KDIC…KQEQ and VNKI…RKHF.

Induces the expression of gadE and mdtEF. Could also regulate the expression of other genes involved in acid resistance. This is HTH-type transcriptional regulator YdeO from Escherichia coli O157:H7.